Here is a 967-residue protein sequence, read N- to C-terminus: Leucine--tRNA ligase (967 aa).

A 'HIGH' region motif is present at residues 43-53 (PYLSGHLHVGH). A 'KMSKS' region motif is present at residues 650–654 (KMSKS). Lys653 serves as a coordination point for ATP.

This sequence belongs to the class-I aminoacyl-tRNA synthetase family.

It localises to the cytoplasm. It carries out the reaction tRNA(Leu) + L-leucine + ATP = L-leucyl-tRNA(Leu) + AMP + diphosphate. The protein is Leucine--tRNA ligase of Pyrococcus furiosus (strain ATCC 43587 / DSM 3638 / JCM 8422 / Vc1).